The chain runs to 365 residues: Peptide chain release factor 2 (365 aa).

Gln252 carries the post-translational modification N5-methylglutamine.

The protein belongs to the prokaryotic/mitochondrial release factor family. In terms of processing, methylated by PrmC. Methylation increases the termination efficiency of RF2.

Its subcellular location is the cytoplasm. In terms of biological role, peptide chain release factor 2 directs the termination of translation in response to the peptide chain termination codons UGA and UAA. The sequence is that of Peptide chain release factor 2 from Shigella flexneri.